A 986-amino-acid polypeptide reads, in one-letter code: Ephrin type-A receptor 4 (986 aa).

The N-terminal stretch at 1–19 (MAGIFYFILFSFLFGICDA) is a signal peptide. Residues 20 to 547 (VTGSRVYPAN…RIIGDGANST (528 aa)) lie on the Extracellular side of the membrane. The 180-residue stretch at 30–209 (EVTLLDSRSV…FYKKCPLTVR (180 aa)) folds into the Eph LBD domain. 3 N-linked (GlcNAc...) asparagine glycosylation sites follow: asparagine 235, asparagine 340, and asparagine 408. 2 Fibronectin type-III domains span residues 328 to 439 (PPSA…TNQA) and 440 to 537 (APSS…TVPS). The helical transmembrane segment at 548 to 569 (VLLVSVSGSVVLVVILIAAFVI) threads the bilayer. The Cytoplasmic portion of the chain corresponds to 570–986 (SRRRSKYSKA…QQMHGRMVPV (417 aa)). Tyrosine 596 and tyrosine 602 each carry phosphotyrosine; by autocatalysis. The 262-residue stretch at 621–882 (IKIEKVIGVG…QIVNMLDKLI (262 aa)) folds into the Protein kinase domain. ATP contacts are provided by residues 627–635 (IGVGEFGEV) and lysine 653. Aspartate 746 acts as the Proton acceptor in catalysis. Tyrosine 779 and tyrosine 928 each carry phosphotyrosine; by autocatalysis. Positions 911-975 (SAVVSVGDWL…LSSVQAMRTQ (65 aa)) constitute an SAM domain. A PDZ-binding motif is present at residues 984-986 (VPV).

This sequence belongs to the protein kinase superfamily. Tyr protein kinase family. Ephrin receptor subfamily. Heterotetramer upon binding of the ligand. The heterotetramer is composed of an ephrin dimer and a receptor dimer. Oligomerization is probably required to induce biological responses. Interacts (phosphorylated at position Tyr-602) with FYN. Interacts (via PDZ motif) with SIPA1L1 (via PDZ domain); controls neuronal morphology through regulation of the RAP1 (RAP1A or RAP1B) and RAP2 (RAP2A, RAP2B or RAP2C) GTPases. Interacts with CDK5, CDK5R1 and NGEF; upon activation by EFNA1 induces NGEF phosphorylation by the kinase CDK5. Interacts with CHN1; effector of EPHA4 in axon guidance linking EPHA4 activation to RAC1 regulation. Forms a ternary complex composed of ADAM10, CADH1 and EPHA4; within the complex, CADH1 is cleaved by ADAM10 which disrupts adherens junctions. Expressed in inner and outer pillar cells of the organ of Corti (at protein level). Highest expression in the adult brain and retina and also detectable in kidney, lung, skeletal muscle and thymus. Not detected in heart and liver. Expressed in myogenic progenitor cells.

The protein resides in the cell membrane. It is found in the cell projection. It localises to the axon. Its subcellular location is the dendrite. The protein localises to the postsynaptic density membrane. The protein resides in the early endosome. It is found in the cell junction. It localises to the adherens junction. The catalysed reaction is L-tyrosyl-[protein] + ATP = O-phospho-L-tyrosyl-[protein] + ADP + H(+). Its function is as follows. Receptor tyrosine kinase which binds membrane-bound ephrin family ligands residing on adjacent cells, leading to contact-dependent bidirectional signaling into neighboring cells. The signaling pathway downstream of the receptor is referred to as forward signaling while the signaling pathway downstream of the ephrin ligand is referred to as reverse signaling. Highly promiscuous, it has the unique property among Eph receptors to bind and to be physiologically activated by both GPI-anchored ephrin-A and transmembrane ephrin-B ligands including EFNA1 and EFNB3. Upon activation by ephrin ligands, modulates cell morphology and integrin-dependent cell adhesion through regulation of the Rac, Rap and Rho GTPases activity. Plays an important role in the development of the nervous system controlling different steps of axonal guidance including the establishment of the corticospinal projections. May also control the segregation of motor and sensory axons during neuromuscular circuit developmen. In addition to its role in axonal guidance plays a role in synaptic plasticity. Activated by EFNA1 phosphorylates CDK5 at 'Tyr-15' which in turn phosphorylates NGEF regulating RHOA and dendritic spine morphogenesis. In the nervous system, also plays a role in repair after injury preventing axonal regeneration and in angiogenesis playing a role in central nervous system vascular formation. Additionally, its promiscuity makes it available to participate in a variety of cell-cell signaling regulating for instance the development of the thymic epithelium. During development of the cochlear organ of Corti, regulates pillar cell separation by forming a ternary complex with ADAM10 and CADH1 which facilitates the cleavage of CADH1 by ADAM10 and disruption of adherens junctions. Phosphorylates CAPRIN1, promoting CAPRIN1-dependent formation of a membraneless compartment. The polypeptide is Ephrin type-A receptor 4 (Epha4) (Mus musculus (Mouse)).